We begin with the raw amino-acid sequence, 161 residues long: Phosphopantetheine adenylyltransferase (161 aa).

Residue Ser-10 coordinates substrate. ATP-binding positions include 10–11 (SF) and His-18. Substrate-binding residues include Lys-42, Ala-75, and Arg-89. ATP is bound by residues 90-92 (GLR), Glu-100, and 125-131 (LSPISSS).

This sequence belongs to the bacterial CoaD family. In terms of assembly, homohexamer. Mg(2+) is required as a cofactor.

Its subcellular location is the cytoplasm. The enzyme catalyses (R)-4'-phosphopantetheine + ATP + H(+) = 3'-dephospho-CoA + diphosphate. It functions in the pathway cofactor biosynthesis; coenzyme A biosynthesis; CoA from (R)-pantothenate: step 4/5. In terms of biological role, reversibly transfers an adenylyl group from ATP to 4'-phosphopantetheine, yielding dephospho-CoA (dPCoA) and pyrophosphate. This Streptococcus agalactiae serotype III (strain NEM316) protein is Phosphopantetheine adenylyltransferase.